Consider the following 442-residue polypeptide: tRNA modification GTPase MnmE (442 aa).

3 residues coordinate (6S)-5-formyl-5,6,7,8-tetrahydrofolate: R24, E84, and R124. Residues 218–366 (GARVALFGPV…LRDDMLGRLW (149 aa)) form the TrmE-type G domain. GTP-binding positions include 228-233 (NAGKST), 247-253 (DDEPGTT), and 272-275 (DTAG). Residues S232 and T253 each contribute to the Mg(2+) site. K442 provides a ligand contact to (6S)-5-formyl-5,6,7,8-tetrahydrofolate.

It belongs to the TRAFAC class TrmE-Era-EngA-EngB-Septin-like GTPase superfamily. TrmE GTPase family. In terms of assembly, homodimer. Heterotetramer of two MnmE and two MnmG subunits. The cofactor is K(+).

Its subcellular location is the cytoplasm. Functionally, exhibits a very high intrinsic GTPase hydrolysis rate. Involved in the addition of a carboxymethylaminomethyl (cmnm) group at the wobble position (U34) of certain tRNAs, forming tRNA-cmnm(5)s(2)U34. This Myxococcus xanthus (strain DK1622) protein is tRNA modification GTPase MnmE.